The primary structure comprises 473 residues: Putative protein TIC 214 C-terminal part (473 aa).

Belongs to the TIC214 family. As to quaternary structure, part of the Tic complex.

It is found in the plastid. The protein localises to the chloroplast. Its function is as follows. Involved in protein precursor import into chloroplasts. May be part of an intermediate translocation complex acting as a protein-conducting channel at the inner envelope. The chain is Putative protein TIC 214 C-terminal part from Anthoceros angustus (Hornwort).